The sequence spans 191 residues: Peptidyl-tRNA hydrolase (191 aa).

Y14 is a tRNA binding site. H19 (proton acceptor) is an active-site residue. Positions 64, 66, and 112 each coordinate tRNA.

It belongs to the PTH family. Monomer.

Its subcellular location is the cytoplasm. It catalyses the reaction an N-acyl-L-alpha-aminoacyl-tRNA + H2O = an N-acyl-L-amino acid + a tRNA + H(+). In terms of biological role, hydrolyzes ribosome-free peptidyl-tRNAs (with 1 or more amino acids incorporated), which drop off the ribosome during protein synthesis, or as a result of ribosome stalling. Its function is as follows. Catalyzes the release of premature peptidyl moieties from peptidyl-tRNA molecules trapped in stalled 50S ribosomal subunits, and thus maintains levels of free tRNAs and 50S ribosomes. In Clostridium botulinum (strain Alaska E43 / Type E3), this protein is Peptidyl-tRNA hydrolase.